A 226-amino-acid polypeptide reads, in one-letter code: Endonuclease V (226 aa).

Residues Asp43 and Asp108 each coordinate Mg(2+).

This sequence belongs to the endonuclease V family. Mg(2+) is required as a cofactor.

The protein resides in the cytoplasm. It catalyses the reaction Endonucleolytic cleavage at apurinic or apyrimidinic sites to products with a 5'-phosphate.. Its function is as follows. DNA repair enzyme involved in the repair of deaminated bases. Selectively cleaves double-stranded DNA at the second phosphodiester bond 3' to a deoxyinosine leaving behind the intact lesion on the nicked DNA. This chain is Endonuclease V, found in Thermosipho melanesiensis (strain DSM 12029 / CIP 104789 / BI429).